We begin with the raw amino-acid sequence, 284 residues long: 4-diphosphocytidyl-2-C-methyl-D-erythritol kinase (284 aa).

Lys-14 is an active-site residue. 98 to 108 (PMGGGLGGGSS) contributes to the ATP binding site. Asp-140 is a catalytic residue.

The protein belongs to the GHMP kinase family. IspE subfamily.

The enzyme catalyses 4-CDP-2-C-methyl-D-erythritol + ATP = 4-CDP-2-C-methyl-D-erythritol 2-phosphate + ADP + H(+). The protein operates within isoprenoid biosynthesis; isopentenyl diphosphate biosynthesis via DXP pathway; isopentenyl diphosphate from 1-deoxy-D-xylulose 5-phosphate: step 3/6. Its function is as follows. Catalyzes the phosphorylation of the position 2 hydroxy group of 4-diphosphocytidyl-2C-methyl-D-erythritol. The protein is 4-diphosphocytidyl-2-C-methyl-D-erythritol kinase of Shewanella piezotolerans (strain WP3 / JCM 13877).